The primary structure comprises 123 residues: uncharacterized protein (123 aa).

Residues 1 to 12 (MALNNVSLSSGD) are compositionally biased toward polar residues. 2 disordered regions span residues 1-25 (MALNNVSLSSGDQRSRVAYRSSHGD) and 53-91 (PRQAVRPSVRAESRRVDGGGRSPREPDGRGRSRQARFSP). The span at 61-82 (VRAESRRVDGGGRSPREPDGRG) shows a compositional bias: basic and acidic residues.

This is an uncharacterized protein from Homo sapiens (Human).